The chain runs to 285 residues: Urease accessory protein UreD (285 aa).

This sequence belongs to the UreD family. UreD, UreF and UreG form a complex that acts as a GTP-hydrolysis-dependent molecular chaperone, activating the urease apoprotein by helping to assemble the nickel containing metallocenter of UreC. The UreE protein probably delivers the nickel.

It localises to the cytoplasm. Required for maturation of urease via the functional incorporation of the urease nickel metallocenter. The sequence is that of Urease accessory protein UreD from Cenarchaeum symbiosum (strain A).